Reading from the N-terminus, the 348-residue chain is Centromere protein L (348 aa).

This sequence belongs to the CENP-L/IML3 family.

Its subcellular location is the nucleus. It is found in the chromosome. The protein localises to the centromere. Functionally, probable component of a centromeric complex involved in assembly of kinetochore proteins, mitotic progression and chromosome segregation. In Xenopus tropicalis (Western clawed frog), this protein is Centromere protein L (cenpl).